Here is a 226-residue protein sequence, read N- to C-terminus: Uracil-DNA glycosylase (226 aa).

Residue aspartate 64 is the Proton acceptor of the active site.

This sequence belongs to the uracil-DNA glycosylase (UDG) superfamily. UNG family.

The protein resides in the cytoplasm. It catalyses the reaction Hydrolyzes single-stranded DNA or mismatched double-stranded DNA and polynucleotides, releasing free uracil.. Functionally, excises uracil residues from the DNA which can arise as a result of misincorporation of dUMP residues by DNA polymerase or due to deamination of cytosine. This Vibrio vulnificus (strain CMCP6) protein is Uracil-DNA glycosylase.